The sequence spans 306 residues: Large ribosomal subunit protein mL45 (306 aa).

It belongs to the mitochondrion-specific ribosomal protein mL45 family. Component of the mitochondrial ribosome large subunit (39S) which comprises a 16S rRNA and about 50 distinct proteins.

It is found in the mitochondrion. Its function is as follows. Component of the mitochondrial large ribosomal subunit (mt-LSU). Within the mitochondrial ribosomes, required to direct the nascent polypeptide toward the tunnel exit and position the exit at a distance from the membrane surface. The chain is Large ribosomal subunit protein mL45 (MRPL45) from Bos taurus (Bovine).